The chain runs to 113 residues: MAKGGFPGFGGNINNLVKQAQKMQRDMERVQEELKEKTVEASAGGGAVTVVATGRKDIKEITIKPEVVDPDDVEMLQDLILAAVNEALRKADEMVTAEISKITGGLGGIPGLF.

Belongs to the YbaB/EbfC family. As to quaternary structure, homodimer.

The protein localises to the cytoplasm. Its subcellular location is the nucleoid. Its function is as follows. Binds to DNA and alters its conformation. May be involved in regulation of gene expression, nucleoid organization and DNA protection. The protein is Nucleoid-associated protein Cthe_2143 of Acetivibrio thermocellus (strain ATCC 27405 / DSM 1237 / JCM 9322 / NBRC 103400 / NCIMB 10682 / NRRL B-4536 / VPI 7372) (Clostridium thermocellum).